The chain runs to 187 residues: UPF0302 protein SERP1032 (187 aa).

The protein belongs to the UPF0302 family.

In Staphylococcus epidermidis (strain ATCC 35984 / DSM 28319 / BCRC 17069 / CCUG 31568 / BM 3577 / RP62A), this protein is UPF0302 protein SERP1032.